The primary structure comprises 307 residues: Methionyl-tRNA formyltransferase (307 aa).

108–111 (SLLP) provides a ligand contact to (6S)-5,6,7,8-tetrahydrofolate.

This sequence belongs to the Fmt family.

The catalysed reaction is L-methionyl-tRNA(fMet) + (6R)-10-formyltetrahydrofolate = N-formyl-L-methionyl-tRNA(fMet) + (6S)-5,6,7,8-tetrahydrofolate + H(+). Its function is as follows. Attaches a formyl group to the free amino group of methionyl-tRNA(fMet). The formyl group appears to play a dual role in the initiator identity of N-formylmethionyl-tRNA by promoting its recognition by IF2 and preventing the misappropriation of this tRNA by the elongation apparatus. The chain is Methionyl-tRNA formyltransferase from Xylella fastidiosa (strain M23).